The chain runs to 298 residues: Probable pyridoxal 5'-phosphate synthase subunit SNZ3 (298 aa).

A D-ribose 5-phosphate-binding site is contributed by Asp21. Residue Lys78 is the Schiff-base intermediate with D-ribose 5-phosphate of the active site. D-ribose 5-phosphate contacts are provided by residues Gly150, Gly213, and 234–235 (GS).

Belongs to the PdxS/SNZ family. Homohexamer. Interacts with THI11.

It catalyses the reaction aldehydo-D-ribose 5-phosphate + D-glyceraldehyde 3-phosphate + L-glutamine = pyridoxal 5'-phosphate + L-glutamate + phosphate + 3 H2O + H(+). The protein operates within cofactor biosynthesis; pyridoxal 5'-phosphate biosynthesis. Catalyzes the formation of pyridoxal 5'-phosphate from ribose 5-phosphate (RBP), glyceraldehyde 3-phosphate (G3P) and ammonia. The ammonia is provided by a SNO isoform. Can also use ribulose 5-phosphate and dihydroxyacetone phosphate as substrates, resulting from enzyme-catalyzed isomerization of RBP and G3P, respectively. This is Probable pyridoxal 5'-phosphate synthase subunit SNZ3 (SNZ3) from Saccharomyces cerevisiae (strain ATCC 204508 / S288c) (Baker's yeast).